The primary structure comprises 586 residues: Acyl-coenzyme A synthetase ACSM3, mitochondrial (586 aa).

A mitochondrion-targeting transit peptide spans M1–A27. N6-succinyllysine occurs at positions 73 and 106. K157 carries the post-translational modification N6-acetyllysine. Residues T235–K243, E374–T379, D461, R476, and K572 each bind ATP.

It belongs to the ATP-dependent AMP-binding enzyme family. Mg(2+) serves as cofactor. The cofactor is Mn(2+).

The protein resides in the mitochondrion. The protein localises to the mitochondrion matrix. The catalysed reaction is a medium-chain fatty acid + ATP + CoA = a medium-chain fatty acyl-CoA + AMP + diphosphate. It catalyses the reaction propanoate + ATP + CoA = propanoyl-CoA + AMP + diphosphate. It carries out the reaction butanoate + ATP + CoA = butanoyl-CoA + AMP + diphosphate. The enzyme catalyses 2-methylpropanoate + ATP + CoA = 2-methylpropanoyl-CoA + AMP + diphosphate. The catalysed reaction is 2-methylbutanoate + ATP + CoA = 2-methylbutanoyl-CoA + AMP + diphosphate. It catalyses the reaction octanoate + ATP + CoA = octanoyl-CoA + AMP + diphosphate. Functionally, catalyzes the activation of fatty acids by CoA to produce an acyl-CoA, the first step in fatty acid metabolism. Capable of activating medium-chain fatty acids with a preference for isobutyrate among fatty acids with 2-6 carbon atoms. The chain is Acyl-coenzyme A synthetase ACSM3, mitochondrial (ACSM3) from Homo sapiens (Human).